Consider the following 220-residue polypeptide: 6-phosphogluconolactonase (220 aa).

It belongs to the glucosamine/galactosamine-6-phosphate isomerase family. 6-phosphogluconolactonase subfamily.

It catalyses the reaction 6-phospho-D-glucono-1,5-lactone + H2O = 6-phospho-D-gluconate + H(+). Its pathway is carbohydrate degradation; pentose phosphate pathway; D-ribulose 5-phosphate from D-glucose 6-phosphate (oxidative stage): step 2/3. Hydrolysis of 6-phosphogluconolactone to 6-phosphogluconate. In Thermotoga maritima (strain ATCC 43589 / DSM 3109 / JCM 10099 / NBRC 100826 / MSB8), this protein is 6-phosphogluconolactonase (pgl).